Consider the following 209-residue polypeptide: Immunoglobulin lambda-like polypeptide 1 (209 aa).

The first 30 residues, 1 to 30 (MKLRVGQTLGTIPRQCEVLLLLLLLGLVDG), serve as a signal peptide directing secretion. The tract at residues 93 to 104 (VFGGGTQLTILG) is j region. Residues 105–209 (QPKSDPLVTL…EKSVSPAECS (105 aa)) form a c region region. The 95-residue stretch at 110–204 (PLVTLFLPSL…EGNTVEKSVS (95 aa)) folds into the Ig-like C1-type domain. A disulfide bridge connects residues Cys131 and Cys190.

In terms of assembly, interacts with VPREB1A. Interacts with SYNV1/HRD1 (via N-terminus); this interaction leads to increased IGLL1 ubiquitination and degradation in pre-B cells, possibly through a lysosomal, not proteasomal, pathway. As to expression, selectively expressed in pre-B lymphocytes.

It localises to the endoplasmic reticulum. Its subcellular location is the secreted. Functionally, critical for B-cell development. This Mus musculus (Mouse) protein is Immunoglobulin lambda-like polypeptide 1 (Igll1).